We begin with the raw amino-acid sequence, 270 residues long: MKFLEKLKQAGNRNKSLLCVGLDPDPKLMPVGMSALEFNREIIEATAPFVCGYKINLAFYEALGKQGWEILSETCEFIPRELITIADAKRGDIGNTSKAYARAILDELDCDGVTVSPYLGYDSLEPFIEYQDKGIFILCLTSNQGSTDFQMLKTEYLGQKRFLYEVVADKASLWNRYENIGLVVGATQQEELKKLRLSYPKLPFLIPGIGAQGGDLKATIENGTNPNGELAIICASRGILYARSGSEFAQGAAEAAEQMRDAINHYRKRF.

The active-site Proton donor is Lys89.

This sequence belongs to the OMP decarboxylase family. Type 2 subfamily.

It carries out the reaction orotidine 5'-phosphate + H(+) = UMP + CO2. It participates in pyrimidine metabolism; UMP biosynthesis via de novo pathway; UMP from orotate: step 2/2. The chain is Orotidine 5'-phosphate decarboxylase from Dehalococcoides mccartyi (strain CBDB1).